The primary structure comprises 466 residues: Ribulose bisphosphate carboxylase large chain (466 aa).

An N6,N6,N6-trimethyllysine modification is found at lysine 5. Residues asparagine 114 and threonine 164 each coordinate substrate. The Proton acceptor role is filled by lysine 166. Lysine 168 is a substrate binding site. Mg(2+)-binding residues include lysine 192, aspartate 194, and glutamate 195. Lysine 192 carries the post-translational modification N6-carboxylysine. Residue histidine 285 is the Proton acceptor of the active site. Substrate contacts are provided by arginine 286, histidine 318, and serine 370.

This sequence belongs to the RuBisCO large chain family. Type I subfamily. As to quaternary structure, heterohexadecamer of 8 large chains and 8 small chains; disulfide-linked. The disulfide link is formed within the large subunit homodimers. Mg(2+) is required as a cofactor. Post-translationally, the disulfide bond which can form in the large chain dimeric partners within the hexadecamer appears to be associated with oxidative stress and protein turnover.

Its subcellular location is the plastid. The protein resides in the chloroplast. The catalysed reaction is 2 (2R)-3-phosphoglycerate + 2 H(+) = D-ribulose 1,5-bisphosphate + CO2 + H2O. It carries out the reaction D-ribulose 1,5-bisphosphate + O2 = 2-phosphoglycolate + (2R)-3-phosphoglycerate + 2 H(+). In terms of biological role, ruBisCO catalyzes two reactions: the carboxylation of D-ribulose 1,5-bisphosphate, the primary event in carbon dioxide fixation, as well as the oxidative fragmentation of the pentose substrate in the photorespiration process. Both reactions occur simultaneously and in competition at the same active site. The sequence is that of Ribulose bisphosphate carboxylase large chain from Saururus cernuus (Lizard's tail).